A 198-amino-acid chain; its full sequence is Nucleoid occlusion factor SlmA (198 aa).

The region spanning 10 to 70 is the HTH tetR-type domain; it reads NRREEILQSL…SLIEFIEDSL (61 aa). The segment at residues 33 to 52 is a DNA-binding region (H-T-H motif); that stretch reads TTAKLAASVGVSEAALYRHF. Residues 117 to 144 are a coiled coil; it reads EQDRLQGRINQLFERIEAQLRQVLREKR.

It belongs to the nucleoid occlusion factor SlmA family. In terms of assembly, homodimer. Interacts with FtsZ.

The protein localises to the cytoplasm. It localises to the nucleoid. Functionally, required for nucleoid occlusion (NO) phenomenon, which prevents Z-ring formation and cell division over the nucleoid. Acts as a DNA-associated cell division inhibitor that binds simultaneously chromosomal DNA and FtsZ, and disrupts the assembly of FtsZ polymers. SlmA-DNA-binding sequences (SBS) are dispersed on non-Ter regions of the chromosome, preventing FtsZ polymerization at these regions. The chain is Nucleoid occlusion factor SlmA from Escherichia coli O45:K1 (strain S88 / ExPEC).